Here is a 269-residue protein sequence, read N- to C-terminus: Small ribosomal subunit protein uS2 (269 aa).

A disordered region spans residues 235–269; it reads FDAKNPLKPQNYNTLNKRPYQDSPRKPSYQNQNQR.

This sequence belongs to the universal ribosomal protein uS2 family.

The sequence is that of Small ribosomal subunit protein uS2 from Aster yellows witches'-broom phytoplasma (strain AYWB).